The sequence spans 265 residues: Glutamate racemase (265 aa).

Substrate is bound by residues 12-13 (DS) and 44-45 (YG). The Proton donor/acceptor role is filled by cysteine 75. 76 to 77 (NT) contributes to the substrate binding site. Catalysis depends on cysteine 186, which acts as the Proton donor/acceptor. Residue 187 to 188 (TH) participates in substrate binding.

Belongs to the aspartate/glutamate racemases family.

It catalyses the reaction L-glutamate = D-glutamate. It participates in cell wall biogenesis; peptidoglycan biosynthesis. In terms of biological role, provides the (R)-glutamate required for cell wall biosynthesis. The chain is Glutamate racemase from Pseudomonas paraeruginosa (strain DSM 24068 / PA7) (Pseudomonas aeruginosa (strain PA7)).